Reading from the N-terminus, the 337-residue chain is Junctional sarcoplasmic reticulum protein 1 (337 aa).

Residues 1–84 (MATRAMEELD…EKEPVSKVTS (84 aa)) form a mediates interaction with CACNA1S region. 2 disordered regions span residues 23 to 125 (SALA…ELPW) and 159 to 337 (EAPA…KGRD). Basic and acidic residues-rich tracts occupy residues 49-59 (SRSHDSQERVT) and 69-79 (TKPKKMEKEPV). Low complexity predominate over residues 165 to 180 (PESWASSSSSPKGPAS). Basic and acidic residues predominate over residues 199–213 (SKLEERVQIPRSEEA). Positions 214–225 (AEKDEWESEEAA) are enriched in acidic residues. 3 stretches are compositionally biased toward basic and acidic residues: residues 236–277 (GPKE…RGAR), 285–309 (RRWE…DRKR), and 316–325 (RRPDEEDRPL). Basic residues predominate over residues 326-337 (GRQKRRAGKGRD).

As to quaternary structure, interacts with CACNA1S, CACNB1 and calsequestrin.

The protein resides in the sarcoplasmic reticulum membrane. It localises to the endoplasmic reticulum membrane. Its function is as follows. Involved in skeletal muscle excitation/contraction coupling (EC), probably acting as a regulator of the voltage-sensitive calcium channel CACNA1S. EC is a physiological process whereby an electrical signal (depolarization of the plasma membrane) is converted into a chemical signal, a calcium gradient, by the opening of ryanodine receptor calcium release channels. May regulate CACNA1S membrane targeting and activity. This Bos taurus (Bovine) protein is Junctional sarcoplasmic reticulum protein 1 (JSRP1).